We begin with the raw amino-acid sequence, 438 residues long: Putative truncated GMC-type inactive oxidoreductase L894 (438 aa).

Positions 1-26 (MYVFLLFSRYKIFYVYIKKMAHRSRC) are cleaved as a signal peptide. 79 to 109 (DIVIIGAGAAGCVLAYYLTKFSDLKIILLEA) contributes to the FAD binding site.

The protein belongs to the GMC oxidoreductase family. Requires FAD as cofactor.

It is found in the virion. The polypeptide is Putative truncated GMC-type inactive oxidoreductase L894 (Acanthamoeba polyphaga (Amoeba)).